The sequence spans 271 residues: Formamidopyrimidine-DNA glycosylase (271 aa).

Residue Pro-2 is the Schiff-base intermediate with DNA of the active site. Residue Glu-3 is the Proton donor of the active site. The Proton donor; for beta-elimination activity role is filled by Lys-58. The DNA site is built by His-92, Arg-111, and Arg-152. The segment at Phe-237 to Arg-271 adopts an FPG-type zinc-finger fold. Arg-261 (proton donor; for delta-elimination activity) is an active-site residue.

This sequence belongs to the FPG family. As to quaternary structure, monomer. It depends on Zn(2+) as a cofactor.

It carries out the reaction Hydrolysis of DNA containing ring-opened 7-methylguanine residues, releasing 2,6-diamino-4-hydroxy-5-(N-methyl)formamidopyrimidine.. The catalysed reaction is 2'-deoxyribonucleotide-(2'-deoxyribose 5'-phosphate)-2'-deoxyribonucleotide-DNA = a 3'-end 2'-deoxyribonucleotide-(2,3-dehydro-2,3-deoxyribose 5'-phosphate)-DNA + a 5'-end 5'-phospho-2'-deoxyribonucleoside-DNA + H(+). In terms of biological role, involved in base excision repair of DNA damaged by oxidation or by mutagenic agents. Acts as a DNA glycosylase that recognizes and removes damaged bases. Has a preference for oxidized purines, such as 7,8-dihydro-8-oxoguanine (8-oxoG). Has AP (apurinic/apyrimidinic) lyase activity and introduces nicks in the DNA strand. Cleaves the DNA backbone by beta-delta elimination to generate a single-strand break at the site of the removed base with both 3'- and 5'-phosphates. This is Formamidopyrimidine-DNA glycosylase from Xanthomonas axonopodis pv. citri (strain 306).